The following is a 162-amino-acid chain: Phosphopantetheine adenylyltransferase (162 aa).

Serine 11 contributes to the substrate binding site. ATP is bound by residues 11–12 (SF) and histidine 19. Lysine 43, leucine 75, and arginine 89 together coordinate substrate. Residues 90–92 (GLR), glutamate 100, and 125–131 (YSYLSSS) each bind ATP.

Belongs to the bacterial CoaD family. In terms of assembly, homohexamer. It depends on Mg(2+) as a cofactor.

The protein resides in the cytoplasm. The enzyme catalyses (R)-4'-phosphopantetheine + ATP + H(+) = 3'-dephospho-CoA + diphosphate. The protein operates within cofactor biosynthesis; coenzyme A biosynthesis; CoA from (R)-pantothenate: step 4/5. Functionally, reversibly transfers an adenylyl group from ATP to 4'-phosphopantetheine, yielding dephospho-CoA (dPCoA) and pyrophosphate. The polypeptide is Phosphopantetheine adenylyltransferase (Geotalea uraniireducens (strain Rf4) (Geobacter uraniireducens)).